The chain runs to 390 residues: NADH-quinone oxidoreductase subunit D (390 aa).

The protein belongs to the complex I 49 kDa subunit family. NDH-1 is composed of 14 different subunits. Subunits NuoB, C, D, E, F, and G constitute the peripheral sector of the complex.

It is found in the cell membrane. The catalysed reaction is a quinone + NADH + 5 H(+)(in) = a quinol + NAD(+) + 4 H(+)(out). In terms of biological role, NDH-1 shuttles electrons from NADH, via FMN and iron-sulfur (Fe-S) centers, to quinones in the respiratory chain. The immediate electron acceptor for the enzyme in this species is believed to be ubiquinone. Couples the redox reaction to proton translocation (for every two electrons transferred, four hydrogen ions are translocated across the cytoplasmic membrane), and thus conserves the redox energy in a proton gradient. This is NADH-quinone oxidoreductase subunit D from Wolbachia pipientis wMel.